A 385-amino-acid polypeptide reads, in one-letter code: Outer membrane porin protein BP0840 (385 aa).

A signal peptide spans Met-1–Ala-20.

It to bacterial outer membrane proteins and porins. As to quaternary structure, homotrimer.

It localises to the cell outer membrane. In terms of biological role, forms anion selective channels. The sequence is that of Outer membrane porin protein BP0840 from Bordetella pertussis (strain Tohama I / ATCC BAA-589 / NCTC 13251).